The following is a 225-amino-acid chain: Transcriptional regulatory protein AfsQ1 (225 aa).

One can recognise a Response regulatory domain in the interval 3–116 (SLLLIEDDDA…VLDARIRAVL (114 aa)). Asp52 carries the 4-aspartylphosphate modification. A DNA-binding region (ompR/PhoB-type) is located at residues 124–223 (TDSASFGSLV…VRGVGYRLDP (100 aa)).

In terms of processing, phosphorylated by AfsQ2.

Its subcellular location is the cytoplasm. It localises to the nucleoid. Its function is as follows. Forms part of a two-component regulatory system AfsQ1/AfsQ2 involved in secondary metabolism. This is Transcriptional regulatory protein AfsQ1 from Streptomyces coelicolor (strain ATCC BAA-471 / A3(2) / M145).